Reading from the N-terminus, the 915-residue chain is Translation initiation factor IF-2 (915 aa).

2 disordered regions span residues 1–105 (MSEG…RALT) and 121–295 (VEAA…RAAI). Low complexity predominate over residues 57 to 81 (PGTPSAPEGGSSSAPAPQSGNAPQG). Positions 84-101 (RSGGGNRGSGRGGAGGAG) are enriched in gly residues. Composition is skewed to basic and acidic residues over residues 121–135 (VEAARREVERREQEK) and 143–180 (EEARRREEEAKRAAEEEARRKEQEEADRIAAEAARKAA). The segment covering 186–195 (AEAPPVPPPA) has biased composition (pro residues). 2 stretches are compositionally biased toward low complexity: residues 201-213 (AAPSSRSAPSRTA) and 230-239 (KVPVAAPSAP). The segment covering 243 to 256 (RLRERGDEGEEERK) has biased composition (basic and acidic residues). Residues 266-278 (PAPRKAAAPVAKK) are compositionally biased toward low complexity. Basic and acidic residues predominate over residues 279 to 295 (AVAEPRRGGRIDVRAAI). The tr-type G domain maps to 414–584 (PRPPVVTVMG…LLQAEVLDLK (171 aa)). Residues 423–430 (GHVDHGKT) are G1. 423–430 (GHVDHGKT) lines the GTP pocket. Residues 448 to 452 (GITQH) form a G2 region. The G3 stretch occupies residues 470-473 (DTPG). GTP-binding positions include 470–474 (DTPGH) and 524–527 (NKCD). Residues 524–527 (NKCD) are G4. The interval 560–562 (SAL) is G5.

Belongs to the TRAFAC class translation factor GTPase superfamily. Classic translation factor GTPase family. IF-2 subfamily.

Its subcellular location is the cytoplasm. In terms of biological role, one of the essential components for the initiation of protein synthesis. Protects formylmethionyl-tRNA from spontaneous hydrolysis and promotes its binding to the 30S ribosomal subunits. Also involved in the hydrolysis of GTP during the formation of the 70S ribosomal complex. The protein is Translation initiation factor IF-2 of Granulibacter bethesdensis (strain ATCC BAA-1260 / CGDNIH1).